The chain runs to 309 residues: Ribose-phosphate pyrophosphokinase (309 aa).

ATP contacts are provided by residues 42-44 and 102-103; these read DEE and RQ. 2 residues coordinate Mg(2+): H136 and D175. The active site involves K199. Residues R201, D226, and 230–234 contribute to the D-ribose 5-phosphate site; that span reads STGGT.

Belongs to the ribose-phosphate pyrophosphokinase family. Class III (archaeal) subfamily. Mg(2+) is required as a cofactor.

The protein localises to the cytoplasm. It catalyses the reaction D-ribose 5-phosphate + ATP = 5-phospho-alpha-D-ribose 1-diphosphate + AMP + H(+). It participates in metabolic intermediate biosynthesis; 5-phospho-alpha-D-ribose 1-diphosphate biosynthesis; 5-phospho-alpha-D-ribose 1-diphosphate from D-ribose 5-phosphate (route I): step 1/1. Functionally, involved in the biosynthesis of the central metabolite phospho-alpha-D-ribosyl-1-pyrophosphate (PRPP) via the transfer of pyrophosphoryl group from ATP to 1-hydroxyl of ribose-5-phosphate (Rib-5-P). The sequence is that of Ribose-phosphate pyrophosphokinase from Aeropyrum pernix (strain ATCC 700893 / DSM 11879 / JCM 9820 / NBRC 100138 / K1).